The following is a 794-amino-acid chain: MAAKDGAKSQEDYKLKDMKPELGERWPHGGQRGGTGWIGSERAASTYDLVEQMFYLYVRVVKAKDLPPNPVTSNCDPYVEVKIGNYKGKTKHFEKRTNPEWNQVFAFSKDKVQSSTVEVFVRDKEMVTRDEYIGKVVFDMREVPTRVPPDSPLAPQWYRLEDRRGESKKRGEVMVAVWLGTQADEAFPDAWHSDASSVQGEGVQSVRSKVYVSPKLWYLRVNVIEAQDVEPSDRSQPPQAFVKVQVGNQILKTKLCPNKTTNPMWNEDLVFVAAEPFEEQFFLTVENKVTPAKDEVMGRLISPLSVFEKRLDHRAVHSKWYNLEKFGFGALEGDKRHELKFSSRIHLRVCLEGGYHVMDESTLYISDVKPTARQLWKSPIGILEVGILSAQGLSPMKTKDGKATTDPYCVAKYGQKWVRTRTIIDSSSPKWNEQYTWEVYDPCTVITLGVFDNCHLGGSEKSNSGAKVDSRIGKVRIRLSTLEADRIYTHSYPLLVLQTKGLKKMGEVQLAVRFTCLSLAHMIYLYGHPLLPKMHYLHPFTVNQLDSLRYQAMSIVAARLSRAEPPLRKENVEYMLDVDSHMWSMRRSKANFFRIVSVFAGLIAMSKWLGDVCYWKNPLTTILFHVLFFILICYPELILPTTFLYMFLIGLWNFRFRPRHPAHMDTKVSWAEAASPDELDEEFDTFPTSKGQDVVKMRYDRLRSVAGRIQMVVGDIATQGERFQALLSWRDPRATCLFVIFCLVAAMILYVTPFKIIALAGGMFWMRHPKFRSKMPSAPSNFFRKLPSKADCML.

The span at 1–27 shows a compositional bias: basic and acidic residues; sequence MAAKDGAKSQEDYKLKDMKPELGERWP. The interval 1-34 is disordered; that stretch reads MAAKDGAKSQEDYKLKDMKPELGERWPHGGQRGG. C2 domains lie at 37–158, 198–321, and 364–492; these read WIGS…PQWY, VQGE…SKWY, and YISD…THSY. The Ca(2+) site is built by aspartate 76, aspartate 123, glutamate 125, and glutamate 131. Transmembrane regions (helical) follow at residues 510 to 532, 595 to 615, 619 to 639, and 737 to 757; these read LAVR…PLLP, IVSV…VCYW, LTTI…ELIL, and LFVI…FKII.

Belongs to the MCTP family. Interacts with FT in phloem companion cells. The cofactor is Ca(2+). As to expression, expressed in the vascular tissues of roots, cotyledons and rosette leaves. Specifically located in the phloem including companion cells. Observed in flowers. Not detected in the shoot apical meristem.

It localises to the endoplasmic reticulum membrane. It is found in the cell junction. Its subcellular location is the plasmodesma. Its function is as follows. Involved in the export of FT from the phloem companion cells to the sieve elements through the plasmodesmata. Regulates flowering time under long days. May function as a signaling molecule by regulating the trafficking of other regulators. This is FT-interacting protein 1 from Arabidopsis thaliana (Mouse-ear cress).